We begin with the raw amino-acid sequence, 457 residues long: Cation efflux system protein CusC (457 aa).

Residues 1 to 17 (MSPCKLLPFCVALALTG) form the signal peptide. C18 is lipidated: N-palmitoyl cysteine. C18 carries S-diacylglycerol cysteine lipidation.

The protein belongs to the outer membrane factor (OMF) (TC 1.B.17) family. In terms of assembly, homotrimer. Component of the cus efflux system composed of CusA, CusB, CusC and CusF.

It localises to the cell outer membrane. Functionally, forms pores that allow passive diffusion of cations across the outer membrane. Part of a cation efflux system that mediates resistance to copper and silver. In pathogenic strains it allows the bacteria to invade brain microvascular endothelial cells (BMEC) thus allowing it to cross the blood-brain barrier and cause neonatal meningitis. In Escherichia coli (strain K12), this protein is Cation efflux system protein CusC (cusC).